Here is a 64-residue protein sequence, read N- to C-terminus: MPKMKSHRGAAKRFKLTGSGLVKHYPSNKHHKNTHKKENRIRALKRNLVLSKSFQKNIREILPH.

Residues 18-39 (GSGLVKHYPSNKHHKNTHKKEN) form a disordered region. The segment covering 26 to 39 (PSNKHHKNTHKKEN) has biased composition (basic residues).

It belongs to the bacterial ribosomal protein bL35 family.

In Symbiobacterium thermophilum (strain DSM 24528 / JCM 14929 / IAM 14863 / T), this protein is Large ribosomal subunit protein bL35.